The sequence spans 279 residues: Shikimate dehydrogenase (NADP(+)) (279 aa).

Shikimate contacts are provided by residues 20-22 and T67; that span reads SRS. The active-site Proton acceptor is K71. Residue D83 coordinates NADP(+). Residues N92 and D108 each coordinate shikimate. NADP(+) is bound by residues 134 to 138 and L223; that span reads GAGGA. Y225 contacts shikimate. G246 is a binding site for NADP(+).

The protein belongs to the shikimate dehydrogenase family. Homodimer.

It catalyses the reaction shikimate + NADP(+) = 3-dehydroshikimate + NADPH + H(+). The protein operates within metabolic intermediate biosynthesis; chorismate biosynthesis; chorismate from D-erythrose 4-phosphate and phosphoenolpyruvate: step 4/7. Its function is as follows. Involved in the biosynthesis of the chorismate, which leads to the biosynthesis of aromatic amino acids. Catalyzes the reversible NADPH linked reduction of 3-dehydroshikimate (DHSA) to yield shikimate (SA). The protein is Shikimate dehydrogenase (NADP(+)) of Cereibacter sphaeroides (strain ATCC 17029 / ATH 2.4.9) (Rhodobacter sphaeroides).